The sequence spans 264 residues: Small ribosomal subunit protein uS2 (264 aa).

Belongs to the universal ribosomal protein uS2 family.

The polypeptide is Small ribosomal subunit protein uS2 (rpsB) (Helicobacter pylori (strain ATCC 700392 / 26695) (Campylobacter pylori)).